A 152-amino-acid polypeptide reads, in one-letter code: Lipoprotein signal peptidase (152 aa).

3 helical membrane passes run 5–25 (LFVL…FWIV), 61–81 (WFFV…LATH), and 84–104 (LNIW…GNFI). Active-site residues include Asp-114 and Asp-130. Residues 125 to 145 (IFNVADSYLTVGVILLLICLW) traverse the membrane as a helical segment.

Belongs to the peptidase A8 family.

The protein resides in the cell membrane. The catalysed reaction is Release of signal peptides from bacterial membrane prolipoproteins. Hydrolyzes -Xaa-Yaa-Zaa-|-(S,diacylglyceryl)Cys-, in which Xaa is hydrophobic (preferably Leu), and Yaa (Ala or Ser) and Zaa (Gly or Ala) have small, neutral side chains.. The protein operates within protein modification; lipoprotein biosynthesis (signal peptide cleavage). This protein specifically catalyzes the removal of signal peptides from prolipoproteins. In Streptococcus pyogenes serotype M1, this protein is Lipoprotein signal peptidase.